A 442-amino-acid polypeptide reads, in one-letter code: Membrane sensor protein UhpC (442 aa).

The Cytoplasmic portion of the chain corresponds to 1–30 (MLSFLKAPANAPLITDKHEVDARYRYWRRH). A helical transmembrane segment spans residues 31–51 (ILITIWLGYALFYFTRKSFNA). At 52–66 (AAPEILASGILTRSD) the chain is on the periplasmic side. A helical membrane pass occupies residues 67–87 (IGLLATLFYITYGVSKFVSGI). The Cytoplasmic segment spans residues 88 to 95 (VSDRSNAR). The helical transmembrane segment at 96–118 (YFMGIGLIATGVVNILFGFSTSL) threads the bilayer. Residues 119 to 121 (WAF) lie on the Periplasmic side of the membrane. Residues 122-144 (ALLWALNAFFQGFGSPVCARLLT) form a helical membrane-spanning segment. Topologically, residues 145–162 (AWYSRTERGGWWALWNTA) are cytoplasmic. The chain crosses the membrane as a helical span at residues 163 to 183 (HNVGGALIPLVMAAVALHYGW). Residue Arg184 is a topological domain, periplasmic. Residues 185–205 (VGMMVAGLLAIGVGMVLCWRL) form a helical membrane-spanning segment. At 206–244 (RDRPQAIGLPPVGDWRHDALEVAQQQEGAGLSRKEILAK) the chain is on the cytoplasmic side. A helical membrane pass occupies residues 245-265 (YVLLNPYIWLLSLCYVLVYVV). Topologically, residues 266–289 (RAAINDWGNLYMSETLGVDLVTAN) are periplasmic. A helical transmembrane segment spans residues 290–310 (TAVSMFELGGFIGALVAGWGS). The Cytoplasmic segment spans residues 311-322 (DKLFNGNRGPMN). Residues 323 to 343 (LIFAAGILLSVGSLWLMPFAS) form a helical membrane-spanning segment. Residues 344 to 347 (YVMQ) lie on the Periplasmic side of the membrane. The helical transmembrane segment at 348–368 (AACFFTTGFFVFGPQMLIGMA) threads the bilayer. Residues 369-379 (AAECSHKEAAG) lie on the Cytoplasmic side of the membrane. The helical transmembrane segment at 380-400 (AATGFVGLFAYLGASLSGWPL) threads the bilayer. The Periplasmic segment spans residues 401-410 (AKVLEIWHWT). A helical transmembrane segment spans residues 411–431 (GFFAVIAIAAGISALLLLPFL). The Cytoplasmic segment spans residues 432 to 442 (NAQAPRETHEA).

Belongs to the major facilitator superfamily. Organophosphate:Pi antiporter (OPA) (TC 2.A.1.4) family.

Its subcellular location is the cell inner membrane. Part of the UhpABC signaling cascade that controls the expression of the hexose phosphate transporter UhpT. UhpC senses external glucose-6-phosphate and interacts with the histidine kinase UhpB, leading to the stimulation of the autokinase activity of UhpB. This chain is Membrane sensor protein UhpC (uhpC), found in Salmonella typhimurium (strain LT2 / SGSC1412 / ATCC 700720).